A 376-amino-acid polypeptide reads, in one-letter code: Fibromodulin (376 aa).

The signal sequence occupies residues 1–18 (MQWTSLLLLAGLFSLSQA). Residue Gln-19 is modified to Pyrrolidone carboxylic acid. 7 positions are modified to sulfotyrosine: Tyr-20, Tyr-38, Tyr-39, Tyr-45, Tyr-47, Tyr-53, and Tyr-55. In terms of domain architecture, LRRNT spans 67–105 (SPSPPDPRDCPQECDCPPNFPTAMYCDNRNLKYLPFVPS). 8 LRR repeats span residues 106–127 (RMKYVYFQNNQITSIQEGVFDN), 130–151 (GLLWIALHGNQITSDKVGRKVF), 156–176 (HLERLYLDHNNLTRMPGPLPR), 177–198 (SLRELHLDHNQISRVPNNALEG), 201–222 (NLTALYLQHNEIQEVGSSMRGL), 224–245 (SLILLDLSYNHLRKVPDGLPSA), 246–266 (LEQLYMEHNNVYTVPDSYFRG), and 269–289 (KLLYVRLSHNSLTNNGLASNT). A glycan (N-linked (GlcNAc...) (keratan sulfate) asparagine) is linked at Asn-127. Asn-166 carries an N-linked (GlcNAc...) (keratan sulfate) asparagine glycan. Asn-201 carries N-linked (GlcNAc...) (keratan sulfate) asparagine glycosylation. N-linked (GlcNAc...) (keratan sulfate) asparagine glycosylation occurs at Asn-291. LRR repeat units lie at residues 294 to 315 (SLLELDLSYNQLQKIPPVNTNL) and 316 to 335 (ENLYLQGNRINEFSISSFCT). Residues Cys-334 and Cys-367 are joined by a disulfide bond. An N-linked (GlcNAc...) asparagine glycan is attached at Asn-341. One copy of the LRR 11 repeat lies at 344-365 (KLQVLRLDGNEIKRSAMPADAP).

Belongs to the small leucine-rich proteoglycan (SLRP) family. SLRP class II subfamily. Binds to type I and type II collagen. In terms of processing, binds keratan sulfate chains.

Its subcellular location is the secreted. The protein resides in the extracellular space. It localises to the extracellular matrix. In terms of biological role, affects the rate of fibrils formation. May have a primary role in collagen fibrillogenesis. The chain is Fibromodulin (FMOD) from Homo sapiens (Human).